A 126-amino-acid polypeptide reads, in one-letter code: Large ribosomal subunit protein uL22 (126 aa).

Belongs to the universal ribosomal protein uL22 family. Part of the 50S ribosomal subunit.

In terms of biological role, this protein binds specifically to 23S rRNA; its binding is stimulated by other ribosomal proteins, e.g. L4, L17, and L20. It is important during the early stages of 50S assembly. It makes multiple contacts with different domains of the 23S rRNA in the assembled 50S subunit and ribosome. The globular domain of the protein is located near the polypeptide exit tunnel on the outside of the subunit, while an extended beta-hairpin is found that lines the wall of the exit tunnel in the center of the 70S ribosome. The sequence is that of Large ribosomal subunit protein uL22 from Rhodospirillum rubrum (strain ATCC 11170 / ATH 1.1.1 / DSM 467 / LMG 4362 / NCIMB 8255 / S1).